The sequence spans 361 residues: Versatile peroxidase VPL2 (361 aa).

The N-terminal stretch at 1–22 (MSFKTLSALALALGAAVQFASA) is a signal peptide. A propeptide spanning residues 23–30 (AVPLVQKR) is cleaved from the precursor. 4 disulfides stabilise this stretch: C33–C45, C44–C308, C64–C144, and C272–C337. E66 and E70 together coordinate Mn(2+). Residue H77 is the Proton acceptor of the active site. Ca(2+) contacts are provided by D78, G90, D92, and S94. N126 carries N-linked (GlcNAc...) asparagine glycosylation. Residue W194 is the Tryptophan radical intermediate of the active site. Heme b is bound at residue H199. S200 is a binding site for Ca(2+). 203–207 (AADKV) serves as a coordination point for heme b. Mn(2+) is bound at residue D205. 4 residues coordinate Ca(2+): D217, T219, V222, and D224.

It belongs to the peroxidase family. Ligninase subfamily. It depends on heme b as a cofactor. The cofactor is Ca(2+).

Its subcellular location is the secreted. It catalyses the reaction 1-(4-hydroxy-3-methoxyphenyl)-2-(2-methoxyphenoxy)propane-1,3-diol + H2O2 = guaiacol + vanillin + glycolaldehyde + H2O. The enzyme catalyses 2 Mn(2+) + H2O2 + 2 H(+) = 2 Mn(3+) + 2 H2O. A versatile ligninolytic peroxidase that combines the substrate specificity characteristics of the two other ligninolytic peroxidases, manganese peroxidase and lignin peroxidase. This is Versatile peroxidase VPL2 (vpl2) from Pleurotus eryngii (Boletus of the steppes).